Consider the following 245-residue polypeptide: Demethylmenaquinone methyltransferase (245 aa).

S-adenosyl-L-methionine contacts are provided by residues threonine 70, aspartate 90, and 118-119; that span reads DC.

It belongs to the class I-like SAM-binding methyltransferase superfamily. MenG/UbiE family.

The enzyme catalyses a 2-demethylmenaquinol + S-adenosyl-L-methionine = a menaquinol + S-adenosyl-L-homocysteine + H(+). The protein operates within quinol/quinone metabolism; menaquinone biosynthesis; menaquinol from 1,4-dihydroxy-2-naphthoate: step 2/2. In terms of biological role, methyltransferase required for the conversion of demethylmenaquinol (DMKH2) to menaquinol (MKH2). This Bacteroides fragilis (strain ATCC 25285 / DSM 2151 / CCUG 4856 / JCM 11019 / LMG 10263 / NCTC 9343 / Onslow / VPI 2553 / EN-2) protein is Demethylmenaquinone methyltransferase.